The following is a 371-amino-acid chain: Cytochrome b (371 aa).

4 consecutive transmembrane segments (helical) span residues 24–44 (FGSM…FLAL), 68–89 (WTMQ…YIHI), 104–124 (WLSG…GYVL), and 169–189 (FFAL…VHIV). 2 residues coordinate heme b: His74 and His88. His173 and His187 together coordinate heme b. His192 provides a ligand contact to a ubiquinone. 4 helical membrane-spanning segments follow: residues 217–237 (YKDT…MSFA), 279–299 (LGGT…PFTH), 311–331 (LSQL…WTAT), and 338–357 (FITI…MTNP).

This sequence belongs to the cytochrome b family. As to quaternary structure, the cytochrome bc1 complex contains 3 respiratory subunits (MT-CYB, CYC1 and UQCRFS1), 2 core proteins (UQCRC1 and UQCRC2) and probably 6 low-molecular weight proteins. Heme b serves as cofactor.

It is found in the mitochondrion inner membrane. Component of the ubiquinol-cytochrome c reductase complex (complex III or cytochrome b-c1 complex) that is part of the mitochondrial respiratory chain. The b-c1 complex mediates electron transfer from ubiquinol to cytochrome c. Contributes to the generation of a proton gradient across the mitochondrial membrane that is then used for ATP synthesis. This is Cytochrome b (MT-CYB) from Homoroselaps lacteus (Spotted harlequin snake).